The chain runs to 202 residues: MSKESYELKAEARERVGKGSSRELRRNGLIPAVIYGDKQAPISIALSTNEVTKRIHAGGFMTTVGTIDVDGKKIKVLPKDYQLDPVRDFTMHVDFLRVSGNTLVNVEIPVHFENEEKSDIKIGGVLNIVRHTVEFHCPANDIPEAITVDLSGLKIGDSVHISNVKLPKNITPVIADRDFTIATIVAPAAGVEEETTEEASEE.

Positions 1–21 are disordered; it reads MSKESYELKAEARERVGKGSS.

The protein belongs to the bacterial ribosomal protein bL25 family. CTC subfamily. In terms of assembly, part of the 50S ribosomal subunit; part of the 5S rRNA/L5/L18/L25 subcomplex. Contacts the 5S rRNA. Binds to the 5S rRNA independently of L5 and L18.

This is one of the proteins that binds to the 5S RNA in the ribosome where it forms part of the central protuberance. The chain is Large ribosomal subunit protein bL25 from Agrobacterium fabrum (strain C58 / ATCC 33970) (Agrobacterium tumefaciens (strain C58)).